The primary structure comprises 127 residues: uncharacterized protein (127 aa).

The next 2 helical transmembrane spans lie at 42 to 62 (LLIS…IAFI) and 78 to 98 (GLPI…YYFL).

Its subcellular location is the membrane. This is an uncharacterized protein from Schizosaccharomyces pombe (strain 972 / ATCC 24843) (Fission yeast).